Consider the following 414-residue polypeptide: Dothistromin biosynthesis peroxidase dotB (414 aa).

The N-terminal stretch at 1-18 (MHFFSAIVLTCLASTAVA) is a signal peptide. Residue cysteine 72 coordinates heme. 3 N-linked (GlcNAc...) asparagine glycosylation sites follow: asparagine 187, asparagine 241, and asparagine 328.

It belongs to the chloroperoxidase family. Heme b serves as cofactor.

The protein operates within mycotoxin biosynthesis. Peroxidase; part of the fragmented gene cluster that mediates the biosynthesis of dothistromin (DOTH), a polyketide toxin very similar in structure to the aflatoxin precursor, versicolorin B. The first step of the pathway is the conversion of acetate to norsolorinic acid (NOR) and requires the fatty acid synthase subunits hexA and hexB, as well as the polyketide synthase pksA. PksA combines a hexanoyl starter unit and 7 malonyl-CoA extender units to synthesize the precursor NOR. The hexanoyl starter unit is provided to the acyl-carrier protein (ACP) domain by the fungal fatty acid synthase hexA/hexB. The second step is the conversion of NOR to averantin (AVN) and requires the norsolorinic acid ketoreductase nor1, which catalyzes the dehydration of norsolorinic acid to form (1'S)-averantin. The cytochrome P450 monooxygenase avnA then catalyzes the hydroxylation of AVN to 5'hydroxyaverantin (HAVN). The next step is performed by adhA that transforms HAVN to averufin (AVF). Averufin might then be converted to hydroxyversicolorone by cypX and avfA. Hydroxyversicolorone is further converted versiconal hemiacetal acetate (VHA) by moxY. VHA is then the substrate for the versiconal hemiacetal acetate esterase est1 to yield versiconal (VAL). Versicolorin B synthase vbsA then converts VAL to versicolorin B (VERB) by closing the bisfuran ring. Then, the activity of the versicolorin B desaturase verB leads to versicolorin A (VERA). DotB, a predicted chloroperoxidase, may perform epoxidation of the A-ring of VERA. Alternatively, a cytochrome P450, such as cypX or avnA could catalyze this step. It is also possible that another, uncharacterized, cytochrome P450 enzyme is responsible for this step. Opening of the epoxide could potentially be achieved by the epoxide hydrolase epoA. However, epoA seems not to be required for DOTH biosynthesis, but other epoxide hydrolases may have the ability to complement this hydrolysis. Alternatively, opening of the epoxide ring could be achieved non-enzymatically. The next step is the deoxygenation of ring A to yield the 5,8-dihydroxyanthraquinone which is most likely catalyzed by the NADPH dehydrogenase encoded by ver1. The last stages of DOTH biosynthesis are proposed to involve hydroxylation of the bisfuran. OrdB and norB might have oxidative roles here. An alternative possibility is that cytochrome P450 monoogenases such as avnA and cypX might perform these steps in addition to previously proposed steps. In Dothistroma septosporum (Red band needle blight fungus), this protein is Dothistromin biosynthesis peroxidase dotB.